Reading from the N-terminus, the 412-residue chain is AT-rich interactive domain-containing protein 3C (412 aa).

The segment covering 1 to 23 (MEALQKQQAARLAQGVGPLAPAC) has biased composition (low complexity). A disordered region spans residues 1–96 (MEALQKQQAA…SSQPPGLHPH (96 aa)). A compositionally biased stretch (acidic residues) spans 50–73 (AEEEEDAEEDEEKREEAGAEEEAA). A compositionally biased stretch (low complexity) spans 78 to 87 (PGAQGPSSPS). One can recognise an ARID domain in the interval 113–205 (DPKRKEFLDD…YLYPYECETR (93 aa)). Disordered stretches follow at residues 232–278 (TPLF…AHAC) and 388–412 (PVPASQGPTNPAPPPSTGPPSSILP). Positions 259-272 (TQSSPGPAQGSTSG) are enriched in polar residues. An REKLES domain is found at 304-389 (LALGPTREKL…GVLFARRQPV (86 aa)).

Interacts (via REKLES DOMAIN) with NPM1; the interaction mediates ARID3C nuclear shuttling.

It is found in the nucleus. Its function is as follows. Transcription factor involved in monocyte-to-macrophage differentiation. Forms a complex with NPM1 to translocate to the nucleus, acting as a transcription factor that promotes the expression of the genes involved in macrophage differentiation, such as STAT3, STAT1 and JUNB. The chain is AT-rich interactive domain-containing protein 3C from Homo sapiens (Human).